Reading from the N-terminus, the 53-residue chain is Light-harvesting protein B-800/820 alpha chain (53 aa).

The Cytoplasmic segment spans residues 1–14; the sequence is MNQGKIWTVVNPAV. A helical transmembrane segment spans residues 15–35; sequence GLPLLLGSVAITALLVHLAVL. Residue His31 coordinates a bacteriochlorophyll. Residues 36–53 are Periplasmic-facing; sequence THTTWFPAFTQGGLKKAA.

The protein belongs to the antenna complex alpha subunit family. The core complex is formed by different alpha and beta chains, binding bacteriochlorophyll molecules, and arranged most probably in tetrameric structures disposed around the reaction center. The non-pigmented gamma chains may constitute additional components.

It localises to the cell inner membrane. Antenna complexes are light-harvesting systems, which transfer the excitation energy to the reaction centers. This chain is Light-harvesting protein B-800/820 alpha chain, found in Rhodoblastus acidophilus (Rhodopseudomonas acidophila).